The sequence spans 1203 residues: DNA-directed RNA polymerase subunit beta' (1203 aa).

Zn(2+) contacts are provided by Cys-60, Cys-62, Cys-75, and Cys-78. Mg(2+)-binding residues include Asp-449, Asp-451, and Asp-453. Positions 818, 892, 899, and 902 each coordinate Zn(2+).

The protein belongs to the RNA polymerase beta' chain family. The RNAP catalytic core consists of 2 alpha, 1 beta, 1 beta' and 1 omega subunit. When a sigma factor is associated with the core the holoenzyme is formed, which can initiate transcription. Mg(2+) is required as a cofactor. It depends on Zn(2+) as a cofactor.

The catalysed reaction is RNA(n) + a ribonucleoside 5'-triphosphate = RNA(n+1) + diphosphate. Functionally, DNA-dependent RNA polymerase catalyzes the transcription of DNA into RNA using the four ribonucleoside triphosphates as substrates. The sequence is that of DNA-directed RNA polymerase subunit beta' from Bacillus thuringiensis (strain Al Hakam).